We begin with the raw amino-acid sequence, 843 residues long: Histone-lysine N-methyltransferase PRDM9 (843 aa).

Residues 23-86 (KVKDEFKDIS…QRQAMKPQIN (64 aa)) enclose the KRAB-related domain. 2 disordered regions span residues 85–104 (INDS…VSPP) and 110–170 (VKHS…KKLK). Positions 205, 208, 216, and 219 each coordinate Zn(2+). Positions 244 to 358 (PGLRISPSGI…PGCELLVWYG (115 aa)) constitute an SET domain. S-adenosyl-L-methionine-binding positions include 256–258 (AGL), Tyr291, and 320–321 (NC). Residue 288–294 (NSGYSWL) participates in substrate binding. Residue Tyr357 participates in substrate binding. N6,N6,N6-trimethyllysine; alternate is present on Lys368. Lys368 bears the N6-methyllysine; alternate mark. Residues Lys372 and Lys374 each carry the N6-methyllysine modification. The segment at 388-411 (HPCLLCSLAFSSQKFLTQHMEWNH) adopts a C2H2-type 1 zinc-finger fold. Zn(2+)-binding residues include Cys390, Cys393, His406, and His411. The tract at residues 418–493 (GTSARINPKP…VEELRTGQTT (76 aa)) is disordered. Basic and acidic residues predominate over residues 436–454 (QEQHVDSQNKNDKASNEVK). Positions 462–472 (RISTTFPSTLK) are enriched in polar residues. Residues 473–488 (EQMRSEESKRTVEELR) show a composition bias toward basic and acidic residues. A C2H2-type 2; degenerate zinc finger spans residues 513–531 (QCGQYFSDKSNVNEHQKTH). C2H2-type zinc fingers lie at residues 537–559 (YVCR…QRTH), 565–587 (YVCR…QRTH), 593–615 (YVCR…QRTH), 621–643 (YVCR…QRTH), 649–671 (YVCR…QRTH), 677–699 (YVCR…QRTH), 705–727 (YVCR…QRTH), 733–755 (YVCR…QRTH), 761–783 (YVCR…QRTH), 789–811 (YVCR…QRTH), and 817–839 (YVCR…QRTH). Zn(2+) contacts are provided by Cys707, Cys710, His723, His727, Cys735, Cys738, His751, His755, Cys763, Cys766, His779, His783, Cys791, Cys794, His807, and His811. The interval 715–805 (TAKSNLIQHQ…RGFTQKSNLI (91 aa)) is DNA-binding.

This sequence belongs to the class V-like SAM-binding methyltransferase superfamily. Homodimer. Interacts with EHMT2 and CDYL; interaction only takes place when PRDM9 is bound to hotspot DNA. Interacts with CXXC1; this interaction does not link PRDM9-activated recombination hotspot sites with DSB machinery and is not required for the hotspot recognition pathway. Forms a complex with EWSR1, REC8, SYCP3 and SYCP1; complex formation is dependent of phosphorylated form of REC8 and requires PRDM9 bound to hotspot DNA; EWSR1 joins PRDM9 with the chromosomal axis through REC8. Mono-methylated; automethylated. Tri-methylated; automethylated. Mono-methylation is predominant; automethylation is lower and slower than H3 peptide methylation and is in a highest S-adenosyl-L-methionine concentration-dependent. There are two major sites for automethylation at Lys-368 and Lys-374. Lysines can be simultaneously methylated, such as Lys-368(me3)/Lys-372(me1), Lys-368(me1)/Lys-374(me1) and Lys-368(me1)/Lys-372(me1)/Lys-374(me1). Automethylation is an intramolecular (cis) process. Specifically expressed in germ cells entering meiotic prophase in female fetal gonads and in postnatal testis. Expressed in early meiotic prophase.

The protein resides in the nucleus. It is found in the chromosome. It catalyses the reaction L-lysyl-[protein] + S-adenosyl-L-methionine = N(6)-methyl-L-lysyl-[protein] + S-adenosyl-L-homocysteine + H(+). It carries out the reaction N(6),N(6)-dimethyl-L-lysyl-[protein] + S-adenosyl-L-methionine = N(6),N(6),N(6)-trimethyl-L-lysyl-[protein] + S-adenosyl-L-homocysteine + H(+). The enzyme catalyses L-lysyl(4)-[histone H3] + 3 S-adenosyl-L-methionine = N(6),N(6),N(6)-trimethyl-L-lysyl(4)-[histone H3] + 3 S-adenosyl-L-homocysteine + 3 H(+). The catalysed reaction is L-lysyl(36)-[histone H3] + 3 S-adenosyl-L-methionine = N(6),N(6),N(6)-trimethyl-L-lysyl(36)-[histone H3] + 3 S-adenosyl-L-homocysteine + 3 H(+). It catalyses the reaction L-lysyl(9)-[histone H3] + 3 S-adenosyl-L-methionine = N(6),N(6),N(6)-trimethyl-L-lysyl(9)-[histone H3] + 3 S-adenosyl-L-homocysteine + 3 H(+). It carries out the reaction L-lysyl(20)-[histone H4] + S-adenosyl-L-methionine = N(6)-methyl-L-lysyl(20)-[histone H4] + S-adenosyl-L-homocysteine + H(+). The enzyme catalyses N(6)-methyl-L-lysyl(20)-[histone H4] + S-adenosyl-L-methionine = N(6),N(6)-dimethyl-L-lysyl(20)-[histone H4] + S-adenosyl-L-homocysteine + H(+). In terms of biological role, histone methyltransferase that sequentially mono-, di-, and tri-methylates both 'Lys-4' (H3K4) and 'Lys-36' (H3K36) of histone H3 to produce respectively trimethylated 'Lys-4' (H3K4me3) and trimethylated 'Lys-36' (H3K36me3) histone H3 and plays a key role in meiotic prophase by determining hotspot localization thereby promoting meiotic recombination. Can also methylate all four core histones with H3 being the best substrate and the most highly modified. Is also able, on one hand, to mono and di-methylate H4K20 and on other hand to trimethylate H3K9 with the di-methylated H3K9 as the best substrate. During meiotic prophase, binds specific DNA sequences through its zinc finger domains thereby determining hotspot localization where it promotes local H3K4me3 and H3K36me3 enrichment on the same nucleosomes through its histone methyltransferase activity. Thereby promotes double-stranded breaks (DSB) formation, at this subset of PRDM9-binding sites, that initiates meiotic recombination for the proper meiotic progression. During meiotic progression hotspot-bound PRDM9 interacts with several complexes; in early leptonema binds CDYL and EHMT2 followed by EWSR1 and CXXC1 by the end of leptonema. EWSR1 joins PRDM9 with the chromosomal axis through REC8. In this way, controls the DSB repair pathway, pairing of homologous chromosomes and sex body formation. Moreover plays a central role in the transcriptional activation of genes during early meiotic prophase thanks to H3K4me3 and H3K36me3 enrichment that represents a specific tag for epigenetic transcriptional activation. In addition performs automethylation. Acetylation and phosphorylation of histone H3 attenuate or prevent histone H3 methylation. This chain is Histone-lysine N-methyltransferase PRDM9, found in Mus musculus (Mouse).